A 147-amino-acid polypeptide reads, in one-letter code: Peptide methionine sulfoxide reductase MsrB (147 aa).

The 123-residue stretch at 25-147 folds into the MsrB domain; that stretch reads DEYWREHLTE…NSVSLIFNKK (123 aa). Cys64, Cys67, Cys113, and Cys116 together coordinate Zn(2+). Cys136 functions as the Nucleophile in the catalytic mechanism.

The protein belongs to the MsrB Met sulfoxide reductase family. It depends on Zn(2+) as a cofactor.

It carries out the reaction L-methionyl-[protein] + [thioredoxin]-disulfide + H2O = L-methionyl-(R)-S-oxide-[protein] + [thioredoxin]-dithiol. This Vibrio cholerae serotype O1 (strain ATCC 39541 / Classical Ogawa 395 / O395) protein is Peptide methionine sulfoxide reductase MsrB.